A 604-amino-acid polypeptide reads, in one-letter code: Kelch-like protein 20 (604 aa).

The region spanning 63 to 130 is the BTB domain; that stretch reads CDVVLVVGAK…SYTSQITVEE (68 aa). The BACK domain maps to 165–267; that stretch reads CLGIRAFADT…SPKFLVGTVG (103 aa). Kelch repeat units lie at residues 314–360, 362–408, 409–455, 457–502, 504–549, and 551–596; these read VLFA…VLDD, LYAV…VLGG, YLYA…VLGG, LYAV…VYQD, IYAV…VVNG, and LMAV…VIKM.

As to quaternary structure, component of the BCR(KLHL20) E3 ubiquitin ligase complex, at least composed of cul3, klhl20 and rbx1.

The protein localises to the cytoplasm. It is found in the perinuclear region. The protein resides in the nucleus. Its pathway is protein modification; protein ubiquitination. In terms of biological role, substrate-specific adapter of a BCR (BTB-CUL3-RBX1) E3 ubiquitin-protein ligase complex involved in interferon response and anterograde Golgi to endosome transport. The BCR(KLHL20) E3 ubiquitin ligase complex mediates the ubiquitination of target proteins, leading to their degradation by the proteasome. It also specifically mediates 'Lys-33'-linked ubiquitination. This is Kelch-like protein 20 (klhl20) from Xenopus laevis (African clawed frog).